The sequence spans 36 residues: Photosystem I reaction center subunit VIII (36 aa).

The helical transmembrane segment at 8–28 threads the bilayer; that stretch reads SIFVPLVGLVFPAIAIASLFL.

The protein belongs to the PsaI family.

The protein localises to the plastid. The protein resides in the chloroplast thylakoid membrane. Functionally, may help in the organization of the PsaL subunit. This is Photosystem I reaction center subunit VIII from Jasminum nudiflorum (Winter jasmine).